We begin with the raw amino-acid sequence, 484 residues long: Glutamyl-tRNA(Gln) amidotransferase subunit A (484 aa).

Catalysis depends on charge relay system residues K74 and S149. S173 (acyl-ester intermediate) is an active-site residue.

It belongs to the amidase family. GatA subfamily. As to quaternary structure, heterotrimer of A, B and C subunits.

The catalysed reaction is L-glutamyl-tRNA(Gln) + L-glutamine + ATP + H2O = L-glutaminyl-tRNA(Gln) + L-glutamate + ADP + phosphate + H(+). In terms of biological role, allows the formation of correctly charged Gln-tRNA(Gln) through the transamidation of misacylated Glu-tRNA(Gln) in organisms which lack glutaminyl-tRNA synthetase. The reaction takes place in the presence of glutamine and ATP through an activated gamma-phospho-Glu-tRNA(Gln). The polypeptide is Glutamyl-tRNA(Gln) amidotransferase subunit A (Prochlorococcus marinus subsp. pastoris (strain CCMP1986 / NIES-2087 / MED4)).